The following is a 407-amino-acid chain: Phosphopentomutase (407 aa).

Mn(2+) contacts are provided by aspartate 10, aspartate 306, histidine 311, aspartate 347, histidine 348, and histidine 359.

This sequence belongs to the phosphopentomutase family. It depends on Mn(2+) as a cofactor.

The protein resides in the cytoplasm. It carries out the reaction 2-deoxy-alpha-D-ribose 1-phosphate = 2-deoxy-D-ribose 5-phosphate. The catalysed reaction is alpha-D-ribose 1-phosphate = D-ribose 5-phosphate. It participates in carbohydrate degradation; 2-deoxy-D-ribose 1-phosphate degradation; D-glyceraldehyde 3-phosphate and acetaldehyde from 2-deoxy-alpha-D-ribose 1-phosphate: step 1/2. Isomerase that catalyzes the conversion of deoxy-ribose 1-phosphate (dRib-1-P) and ribose 1-phosphate (Rib-1-P) to deoxy-ribose 5-phosphate (dRib-5-P) and ribose 5-phosphate (Rib-5-P), respectively. The sequence is that of Phosphopentomutase from Enterobacter sp. (strain 638).